Reading from the N-terminus, the 489-residue chain is Probable apyrase 1 (489 aa).

Residues 1 to 28 (MRRFSAAAGARQQQQQGEAVSDRVLRFR) lie on the Cytoplasmic side of the membrane. Residues 29–49 (GVLVVVLAPVLLISLVLLLMP) traverse the membrane as a helical; Signal-anchor for type II membrane protein segment. At 50-489 (RAPASATVEG…GSAIEVASSS (440 aa)) the chain is on the extracellular side. 89-99 (VIFDAGSSGSR) contacts ATP. Glu-211 (proton acceptor) is an active-site residue. An ATP-binding site is contributed by 235–245 (GVVDLGGGSVQ).

Belongs to the GDA1/CD39 NTPase family. Ca(2+) serves as cofactor.

The protein localises to the membrane. The enzyme catalyses a ribonucleoside 5'-triphosphate + 2 H2O = a ribonucleoside 5'-phosphate + 2 phosphate + 2 H(+). In terms of biological role, catalyzes the hydrolysis of phosphoanhydride bonds of nucleoside tri- and di-phosphates. This Oryza sativa subsp. japonica (Rice) protein is Probable apyrase 1 (APY1).